The sequence spans 320 residues: MAEITGLVLPFFGLIFLGYLTARLVDHPGEAMGWLNTFIVYLALPALFFKLVSRTPVEELTRADFILTSVGTTYVVFALIFAIGLFLRRNTVAEATMQGFAGAYGNIGYMGPGLALLALGETAAVPVALIFCFENAAHFTVAPAMMAAAGGSKQKPAVVALGIARRIAFHPFILSTFAGVAAAFLSFEPPLPLQRLIDYLAQAAAPCALFAMGVTLALRPLKRIPAEIGYIVPAKLVLHPVLMYLALSLGGAYDPIWVQTAVLLASLPTATNVFVIGQQYGVWQERASATILITTLLSVATVTGLLYLIRSGALPADLFP.

8 helical membrane-spanning segments follow: residues 1 to 21 (MAEI…GYLT), 32 to 52 (MGWL…FKLV), 65 to 85 (FILT…AIGL), 113 to 133 (GLAL…IFCF), 167 to 187 (IAFH…FLSF), 196 to 216 (LIDY…GVTL), 256 to 276 (IWVQ…VFVI), and 289 to 309 (ATIL…LYLI).

This sequence belongs to the auxin efflux carrier (TC 2.A.69) family.

Its subcellular location is the cell membrane. The sequence is that of Putative malonate transporter (mdcF) from Rhizobium meliloti (strain 1021) (Ensifer meliloti).